A 440-amino-acid chain; its full sequence is GTPase Der (440 aa).

EngA-type G domains lie at 3 to 167 (PIIA…PYDR) and 176 to 351 (TRIA…EQYC). Residues 9–16 (GRPNVGKS), 56–60 (DTGGF), 119–122 (NKVD), 182–189 (GRPNVGKS), 229–233 (DTAGI), and 294–297 (NKWD) each bind GTP. Residues 352–436 (KRVTTGELNR…PLKLIFRGRD (85 aa)) form the KH-like domain.

This sequence belongs to the TRAFAC class TrmE-Era-EngA-EngB-Septin-like GTPase superfamily. EngA (Der) GTPase family. In terms of assembly, associates with the 50S ribosomal subunit.

Functionally, GTPase that plays an essential role in the late steps of ribosome biogenesis. This is GTPase Der from Geobacter sp. (strain M21).